The sequence spans 376 residues: Chaperone protein DnaJ (376 aa).

One can recognise a J domain in the interval 5–69; that stretch reads DYYEVLGVSK…QKRAQYDQYG (65 aa). The segment at 133–215 adopts a CR-type zinc-finger fold; it reads GKDAEIEIPR…CHGKGRVTKT (83 aa). Zn(2+) contacts are provided by cysteine 146, cysteine 149, cysteine 163, cysteine 166, cysteine 189, cysteine 192, cysteine 203, and cysteine 206. CXXCXGXG motif repeat units follow at residues 146–153, 163–170, 189–196, and 203–210; these read CDTCHGSG, CSHCGGKG, CQYCNGTG, and CPTCHGKG.

Belongs to the DnaJ family. In terms of assembly, homodimer. Zn(2+) serves as cofactor.

The protein resides in the cytoplasm. In terms of biological role, participates actively in the response to hyperosmotic and heat shock by preventing the aggregation of stress-denatured proteins and by disaggregating proteins, also in an autonomous, DnaK-independent fashion. Unfolded proteins bind initially to DnaJ; upon interaction with the DnaJ-bound protein, DnaK hydrolyzes its bound ATP, resulting in the formation of a stable complex. GrpE releases ADP from DnaK; ATP binding to DnaK triggers the release of the substrate protein, thus completing the reaction cycle. Several rounds of ATP-dependent interactions between DnaJ, DnaK and GrpE are required for fully efficient folding. Also involved, together with DnaK and GrpE, in the DNA replication of plasmids through activation of initiation proteins. In Listeria monocytogenes serotype 4b (strain CLIP80459), this protein is Chaperone protein DnaJ.